The following is a 364-amino-acid chain: Alanine racemase (364 aa).

Catalysis depends on K35, which acts as the Proton acceptor; specific for D-alanine. K35 carries the N6-(pyridoxal phosphate)lysine modification. R132 lines the substrate pocket. Catalysis depends on Y260, which acts as the Proton acceptor; specific for L-alanine. M308 provides a ligand contact to substrate.

It belongs to the alanine racemase family. Pyridoxal 5'-phosphate serves as cofactor.

The enzyme catalyses L-alanine = D-alanine. It functions in the pathway amino-acid biosynthesis; D-alanine biosynthesis; D-alanine from L-alanine: step 1/1. Catalyzes the interconversion of L-alanine and D-alanine. May also act on other amino acids. This Acidithiobacillus ferrooxidans (strain ATCC 23270 / DSM 14882 / CIP 104768 / NCIMB 8455) (Ferrobacillus ferrooxidans (strain ATCC 23270)) protein is Alanine racemase (alr).